The primary structure comprises 123 residues: MGSKGGFILLWLLSILAVLCHLGHSLQCYNCINPAGSCTTAMNCSHNQDACIFVEAVPPKTYYQCWRFDECNFDFISRNLAEKKLKYNCCRKDLCNKSDATISSGKTALLVILLLVATWHFCL.

The signal sequence occupies residues 1-25 (MGSKGGFILLWLLSILAVLCHLGHS). The 78-residue stretch at 26–103 (LQCYNCINPA…LCNKSDATIS (78 aa)) folds into the UPAR/Ly6 domain. 5 disulfide bridges follow: Cys-28–Cys-51, Cys-31–Cys-38, Cys-44–Cys-65, Cys-71–Cys-89, and Cys-90–Cys-95. Asn-43 is a glycosylation site (N-linked (GlcNAc...) asparagine). Ser-98 carries the GPI-anchor amidated serine lipid modification. The propeptide at 99–123 (DATISSGKTALLVILLLVATWHFCL) is removed in mature form.

As to quaternary structure, interacts with T-cell surface antigen CD2. N- and O-glycosylated. Expressed in all tissues tested (lung, testis liver, kidney, spleen, heart and skeletal muscle). Highest levels in lung and spleen, lowest levels in liver and skeletal muscle.

The protein localises to the cell membrane. It localises to the secreted. Its function is as follows. Potent inhibitor of the complement membrane attack complex (MAC) action, which protects self-cells from damage during complement activation. Acts by binding to the beta-haipins of C8 (C8A and C8B) components of the assembling MAC, forming an intermolecular beta-sheet that prevents incorporation of the multiple copies of C9 required for complete formation of the osmolytic pore. This is CD59 glycoprotein from Sus scrofa (Pig).